A 444-amino-acid chain; its full sequence is Phosphoglucosamine mutase (444 aa).

Ser-104 functions as the Phosphoserine intermediate in the catalytic mechanism. Mg(2+)-binding residues include Ser-104, Asp-243, Asp-245, and Asp-247. Ser-104 is subject to Phosphoserine.

The protein belongs to the phosphohexose mutase family. Mg(2+) serves as cofactor. Activated by phosphorylation.

It carries out the reaction alpha-D-glucosamine 1-phosphate = D-glucosamine 6-phosphate. Its function is as follows. Catalyzes the conversion of glucosamine-6-phosphate to glucosamine-1-phosphate. The chain is Phosphoglucosamine mutase from Neisseria meningitidis serogroup C / serotype 2a (strain ATCC 700532 / DSM 15464 / FAM18).